Here is a 326-residue protein sequence, read N- to C-terminus: Probable cell division protein WhiA (326 aa).

Positions 275 to 308 (SLDELGHHADPPMTKDAVAGRIRRLLAMADKKAV) form a DNA-binding region, H-T-H motif.

This sequence belongs to the WhiA family.

Its function is as follows. Involved in cell division and chromosome segregation. The polypeptide is Probable cell division protein WhiA (Clavibacter sepedonicus (Clavibacter michiganensis subsp. sepedonicus)).